Consider the following 211-residue polypeptide: Histone H1-beta, late embryonic (211 aa).

Disordered stretches follow at residues 1 to 22 (MAAE…PSSS) and 81 to 211 (KGAS…AAKK). Residues 17–91 (AHPSSSEMVL…GASGSFKLGK (75 aa)) enclose the H15 domain. Basic and acidic residues-rich tracts occupy residues 95-107 (GKSD…DAAK) and 114-123 (KKKEAKEKKA). 2 stretches are compositionally biased toward basic residues: residues 124 to 177 (ARSK…KKAA) and 185 to 211 (KAAK…AAKK).

It belongs to the histone H1/H5 family.

It localises to the nucleus. The protein resides in the chromosome. Its function is as follows. Histones H1 are necessary for the condensation of nucleosome chains into higher-order structures. This chain is Histone H1-beta, late embryonic, found in Strongylocentrotus purpuratus (Purple sea urchin).